The primary structure comprises 290 residues: Ribosomal RNA small subunit methyltransferase A (290 aa).

Positions 27, 29, 54, 75, 100, and 125 each coordinate S-adenosyl-L-methionine.

The protein belongs to the class I-like SAM-binding methyltransferase superfamily. rRNA adenine N(6)-methyltransferase family. RsmA subfamily.

It localises to the cytoplasm. The catalysed reaction is adenosine(1518)/adenosine(1519) in 16S rRNA + 4 S-adenosyl-L-methionine = N(6)-dimethyladenosine(1518)/N(6)-dimethyladenosine(1519) in 16S rRNA + 4 S-adenosyl-L-homocysteine + 4 H(+). In terms of biological role, specifically dimethylates two adjacent adenosines (A1518 and A1519) in the loop of a conserved hairpin near the 3'-end of 16S rRNA in the 30S particle. May play a critical role in biogenesis of 30S subunits. The polypeptide is Ribosomal RNA small subunit methyltransferase A (Streptococcus equi subsp. zooepidemicus (strain H70)).